The sequence spans 131 residues: Small ribosomal subunit protein uS8 (131 aa).

Belongs to the universal ribosomal protein uS8 family. Part of the 30S ribosomal subunit. Contacts proteins S5 and S12.

In terms of biological role, one of the primary rRNA binding proteins, it binds directly to 16S rRNA central domain where it helps coordinate assembly of the platform of the 30S subunit. This is Small ribosomal subunit protein uS8 from Campylobacter jejuni subsp. doylei (strain ATCC BAA-1458 / RM4099 / 269.97).